The primary structure comprises 272 residues: Phosphate import ATP-binding protein PstB 2 (272 aa).

The ABC transporter domain occupies 26 to 267; the sequence is IEINNLCLNY…PIHKQTEDYI (242 aa). 58-65 is an ATP binding site; it reads GPSGCGKS.

Belongs to the ABC transporter superfamily. Phosphate importer (TC 3.A.1.7) family. In terms of assembly, the complex is composed of two ATP-binding proteins (PstB), two transmembrane proteins (PstC and PstA) and a solute-binding protein (PstS).

It is found in the cell inner membrane. It catalyses the reaction phosphate(out) + ATP + H2O = ADP + 2 phosphate(in) + H(+). Functionally, part of the ABC transporter complex PstSACB involved in phosphate import. Responsible for energy coupling to the transport system. This Aliivibrio fischeri (strain ATCC 700601 / ES114) (Vibrio fischeri) protein is Phosphate import ATP-binding protein PstB 2.